A 457-amino-acid chain; its full sequence is Cysteine desulfurase (457 aa).

The pyridoxal 5'-phosphate site is built by A127, T128, Q235, S255, and H257. The residue at position 258 (K258) is an N6-(pyridoxal phosphate)lysine. Pyridoxal 5'-phosphate is bound at residue T295. C381 acts as the Cysteine persulfide intermediate in catalysis. C381 contacts [2Fe-2S] cluster. C381 lines the Zn(2+) pocket. C381 is modified (cysteine persulfide).

It belongs to the class-V pyridoxal-phosphate-dependent aminotransferase family. NifS/IscS subfamily. In terms of assembly, homodimer. Component of the mitochondrial core iron-sulfur cluster (ISC) complex composed of NFS1, LYRM4, NDUFAB1, ISCU, FXN, and FDX2; this complex is a heterohexamer containing two copies of each monomer. Component of cyteine desulfurase complex composed of NFS1, LYRM4 and NDUFAB1; this complex contributes to the activation of cysteine desulfurase activity and NFS1 stabilization. Interacts (homodimer form) with ISCU (D-state); each monomer interacts with the C-terminal regions of each NFS1 monomer. Interacts with HSPA9. Interacts (via homodimer form) with FDX2. Interacts (via homodimer form) with FXN. Interacts with LYRM4. Component of a complex composed of FXN, NFS1, LYRM4 and ISCU. As to quaternary structure, monomer. Homodimer. Oligomer. Interacts with ISCU. Component of the cysteine desulfurase complex composed of NFS1 and LYRM4; this complex contributes to the activation of cysteine desulfurase activity. Interacts with MOCS3. It depends on pyridoxal 5'-phosphate as a cofactor. In terms of processing, N-gluconoylated. Cysteine persulfide intermediate is reduced by thiol-containing molecules like glutathione and L-cysteine. Persulfide reduction is a rate-limiting step of cysteine desulfurase catalytic cycle.

Its subcellular location is the mitochondrion. It localises to the cytoplasm. The protein localises to the nucleus. It is found in the cytoskeleton. The protein resides in the microtubule organizing center. Its subcellular location is the centrosome. It carries out the reaction (sulfur carrier)-H + L-cysteine = (sulfur carrier)-SH + L-alanine. It catalyses the reaction L-cysteinyl-[cysteine desulfurase] + L-cysteine = S-sulfanyl-L-cysteinyl-[cysteine desulfurase] + L-alanine. With respect to regulation, active only in complex with LYRM4. Functionally, cysteine desulfurase, of the core iron-sulfur cluster (ISC) assembly complex, that catalyzes the desulfuration of L-cysteine to L-alanine, as component of the cysteine desulfurase complex leading to the formation of a cysteine persulfide intermediate at the active site cysteine residue and participates in the [2Fe-2S] clusters assembly on the scaffolding protein ISCU. The persulfide is then transferred on the flexible Cys loop from the catalytic site of NFS1 to the surface of NFS1. After the NFS1-linked persulfide sulfur is transferred to one of the conserved Cys residues of the scaffold, a reaction assisted by FXN. The core iron-sulfur cluster (ISC) assembly complex is involved in the de novo synthesis of a [2Fe-2S] cluster, the first step of the mitochondrial iron-sulfur protein biogenesis. This process is initiated by the cysteine desulfurase complex (NFS1:LYRM4:NDUFAB1) that produces persulfide which is delivered on the scaffold protein ISCU in a FXN-dependent manner. Then this complex is stabilized by FDX2 which provides reducing equivalents to accomplish the [2Fe-2S] cluster assembly. Finally, the [2Fe-2S] cluster is transferred from ISCU to chaperone proteins, including HSCB, HSPA9 and GLRX5. May catalyze the desulfuration of L-cysteine to L-alanine as component of the cysteine desulfurase complex (NFS1:LYRM4), leading to the formation of a cysteine persulfide intermediate. Acts as a sulfur donor for MOCS3 by transferring the sulfur of the cysteine persulfide intermediate on MOCS3. The sequence is that of Cysteine desulfurase from Pongo abelii (Sumatran orangutan).